Here is a 64-residue protein sequence, read N- to C-terminus: UPF0434 protein Bcen_1934 (64 aa).

The protein belongs to the UPF0434 family.

The polypeptide is UPF0434 protein Bcen_1934 (Burkholderia orbicola (strain AU 1054)).